Consider the following 155-residue polypeptide: SsrA-binding protein (155 aa).

Positions 123–142 (DLHDKRETEKKRDWEREKGQ) are enriched in basic and acidic residues. Residues 123–155 (DLHDKRETEKKRDWEREKGQLMRHKISSPRKDT) form a disordered region. The segment covering 143–155 (LMRHKISSPRKDT) has biased composition (basic residues).

It belongs to the SmpB family.

The protein localises to the cytoplasm. Its function is as follows. Required for rescue of stalled ribosomes mediated by trans-translation. Binds to transfer-messenger RNA (tmRNA), required for stable association of tmRNA with ribosomes. tmRNA and SmpB together mimic tRNA shape, replacing the anticodon stem-loop with SmpB. tmRNA is encoded by the ssrA gene; the 2 termini fold to resemble tRNA(Ala) and it encodes a 'tag peptide', a short internal open reading frame. During trans-translation Ala-aminoacylated tmRNA acts like a tRNA, entering the A-site of stalled ribosomes, displacing the stalled mRNA. The ribosome then switches to translate the ORF on the tmRNA; the nascent peptide is terminated with the 'tag peptide' encoded by the tmRNA and targeted for degradation. The ribosome is freed to recommence translation, which seems to be the essential function of trans-translation. The protein is SsrA-binding protein of Methylibium petroleiphilum (strain ATCC BAA-1232 / LMG 22953 / PM1).